Consider the following 509-residue polypeptide: MELIEKLQPIKKPLMVLGTSSGAGKSLTVTAIGRILKNSGEEPIPFKGQNMSNNAWVDWNGGEMAFSQALQAFACGIIPSSEMNPILLKPQGNSTSEVIHLGKSKGITTAKDYYKDWFFPGWGVIKKSLNSIYERYPNCRLIIEGAGSPVEMNLIHRDLTNLRVAKYLNANCILVTDIERGGVFAQIIGTLELMKPDERKLIKGILINRFRGDLSLFEEGKKWIENKTKIPVLGIIPWLDDKFPPEDSLDLLEKKSSLTNPELKVGIIKLPSISNFSDFDPLENEESILIKWVMESQNLNQYDFLIIPGSKQTIKDQKFLRDSGLSEDIKNYSTNKGNIFGICGGLQMLGTILEDPFFKEGSKINCEKSINGIGLLPLKTTFFQKKITRQINSESIWPQVTEINGFEIHNGVTELDNSQDTFKIKPIFKDLDLGWYKENIQGGTIAGTYIHGIFENDDWRDHYLNLIRKGKNLPLLKKRTRSYKMKRENIIDNLANEFKKNFNISSLLN.

The GATase cobBQ-type domain maps to 262–459; the sequence is ELKVGIIKLP…IHGIFENDDW (198 aa). Cysteine 343 (nucleophile) is an active-site residue. Histidine 451 is an active-site residue.

Belongs to the CobB/CobQ family. CobQ subfamily.

The protein operates within cofactor biosynthesis; adenosylcobalamin biosynthesis. Catalyzes amidations at positions B, D, E, and G on adenosylcobyrinic A,C-diamide. NH(2) groups are provided by glutamine, and one molecule of ATP is hydrogenolyzed for each amidation. In Prochlorococcus marinus subsp. pastoris (strain CCMP1986 / NIES-2087 / MED4), this protein is Cobyric acid synthase.